Reading from the N-terminus, the 124-residue chain is Holo-[acyl-carrier-protein] synthase (124 aa).

Residues Asp8 and Glu58 each contribute to the Mg(2+) site.

Belongs to the P-Pant transferase superfamily. AcpS family. The cofactor is Mg(2+).

It localises to the cytoplasm. It catalyses the reaction apo-[ACP] + CoA = holo-[ACP] + adenosine 3',5'-bisphosphate + H(+). In terms of biological role, transfers the 4'-phosphopantetheine moiety from coenzyme A to a Ser of acyl-carrier-protein. The protein is Holo-[acyl-carrier-protein] synthase of Lacticaseibacillus casei (strain BL23) (Lactobacillus casei).